Here is a 205-residue protein sequence, read N- to C-terminus: Putative epidermin response regulator (205 aa).

Positions 103–200 (KYIKYVNDDF…ERKLGYKILI (98 aa)) form a DNA-binding region, ompR/PhoB-type.

To the C-terminus of E.coli phosphate regulon transcriptional regulatory protein PhoB.

This is Putative epidermin response regulator (epiQ) from Staphylococcus epidermidis.